The following is a 127-amino-acid chain: Cytochrome b-c1 complex subunit 7, mitochondrial (127 aa).

It belongs to the UQCRB/QCR7 family. In terms of assembly, component of the ubiquinol-cytochrome c oxidoreductase (cytochrome b-c1 complex, complex III, CIII), a multisubunit enzyme composed of 10 subunits. The complex is composed of 3 respiratory subunits cytochrome b (COB), cytochrome c1 (CYT1) and Rieske protein (RIP1), 2 core protein subunits COR1 and QCR2, and 5 low-molecular weight protein subunits QCR6, QCR7, QCR8, QCR9 and QCR10. The complex exists as an obligatory dimer and forms supercomplexes (SCs) in the inner mitochondrial membrane with a monomer or a dimer of cytochrome c oxidase (complex IV, CIV), resulting in 2 different assemblies (supercomplexes III(2)IV and III(2)IV(2)).

The protein resides in the mitochondrion inner membrane. In terms of biological role, component of the ubiquinol-cytochrome c oxidoreductase, a multisubunit transmembrane complex that is part of the mitochondrial electron transport chain which drives oxidative phosphorylation. Plays an important role in the uptake of multiple carbon sources such acetate, lactate, amino acids or GlcNAc present in different host niches. The polypeptide is Cytochrome b-c1 complex subunit 7, mitochondrial (Candida albicans (strain SC5314 / ATCC MYA-2876) (Yeast)).